The following is a 654-amino-acid chain: Translation factor GUF1, mitochondrial (654 aa).

The tr-type G domain maps to 57–237; it reads ENYRNFSIVA…SVIKNIPSPV (181 aa). Residues 66 to 73, 130 to 134, and 184 to 187 contribute to the GTP site; these read AHVDHGKS, DTPGH, and NKID.

This sequence belongs to the TRAFAC class translation factor GTPase superfamily. Classic translation factor GTPase family. LepA subfamily.

The protein localises to the mitochondrion inner membrane. The enzyme catalyses GTP + H2O = GDP + phosphate + H(+). In terms of biological role, promotes mitochondrial protein synthesis. May act as a fidelity factor of the translation reaction, by catalyzing a one-codon backward translocation of tRNAs on improperly translocated ribosomes. Binds to mitochondrial ribosomes in a GTP-dependent manner. The polypeptide is Translation factor GUF1, mitochondrial (Candida albicans (strain SC5314 / ATCC MYA-2876) (Yeast)).